A 70-amino-acid polypeptide reads, in one-letter code: Melittin-N (70 aa).

A signal peptide spans 1–21; the sequence is MKFLVNVALVFMVVYISYIYA. Positions 22–43 are cleaved as a propeptide — removed by a dipeptidylpeptidase; that stretch reads APEPEPAPEPEAEADAEADPEA. The residue at position 44 (glycine 44) is an N-formylglycine; partial. Glutamine 69 carries the glutamine amide modification.

This sequence belongs to the melittin family. As to quaternary structure, monomer (in solution and for integration into membranes), homotetramer (in solution and potentially as a toroidal pore in membranes), and potenially homomultimer (as a toroidal pore in membranes). Expressed by the venom gland.

Its subcellular location is the secreted. It localises to the target cell membrane. Its function is as follows. Main toxin of bee venom with strong hemolytic activity and antimicrobial activity. It has enhancing effects on bee venom phospholipase A2 activity. This amphipathic toxin binds to negatively charged membrane surface and forms pore by inserting into lipid bilayers inducing the leakage of ions and molecules and the enhancement of permeability that ultimately leads to cell lysis. It acts as a voltage-gated pore with higher selectivity for anions over cations. The ion conductance has been shown to be voltage-dependent. Self-association of melittin in membranes is promoted by high ionic strength, but not by the presence of negatively charged lipids. In vivo, intradermal injection into healthy human volunteers produce sharp pain sensation and an inflammatory response. It produces pain by activating primary nociceptor cells directly and indirectly due to its ability to activate plasma membrane phospholipase A2 and its pore-forming activity. Shows lower cytotoxicity when tested on E.coli and cancer cell lines than melittin, as well as lower anti-inflammatory properties and lower properties to interact to small unilamellar liposomes. In Apis cerana (Indian honeybee), this protein is Melittin-N (MELT).